A 153-amino-acid chain; its full sequence is Myosin regulatory light chain, smooth muscle (153 aa).

EF-hand domains follow at residues 12 to 47, 81 to 116, and 117 to 152; these read SQIQ…LGRG, DPEE…QADR, and FSQS…GQEE. Residues Asp25, Asn27, Asp29, and Asp36 each contribute to the Ca(2+) site.

In molluscan muscle, calcium regulation is associated with myosin rather than with actin. Muscle myosin contains two types of light chains: the catalytic light chain, essential for ATPase activity, and the regulatory light chain, a calcium-binding protein responsible for Ca(2+) dependent binding and Ca(2+) dependent Mg-ATPase activity. The chain is Myosin regulatory light chain, smooth muscle from Halocynthia roretzi (Sea squirt).